The chain runs to 77 residues: Tachyplesin-2 (77 aa).

Residues M1–A23 form the signal peptide. Cystine bridges form between C26–C39 and C30–C35. R40 carries the post-translational modification Arginine amide. A propeptide spanning residues G41–E77 is cleaved from the precursor.

The protein belongs to the tachyplesin/polyphemusin family. In terms of tissue distribution, hemocytes.

It is found in the secreted. Its function is as follows. Significantly inhibits the growth of Gram-negative and Gram-positive bacteria. The protein is Tachyplesin-2 of Tachypleus tridentatus (Japanese horseshoe crab).